Here is a 212-residue protein sequence, read N- to C-terminus: External core antigen (212 aa).

The N-terminal stretch at 1–19 is a signal peptide; it reads MQLFHLCLIISCSCPTVQA. Positions 25–27 are HBEAG; sequence GWL. The tract at residues 165–212 is disordered; the sequence is NAPILSTLPETTVVRRRGRSPRRRTPSPRRRRSQSPRRRRSQSPASQC. The span at 178 to 205 shows a compositional bias: basic residues; that stretch reads VRRRGRSPRRRTPSPRRRRSQSPRRRRS. One copy of the 1; half-length repeat lies at 184-190; it reads SPRRRTP. A 3 X 8 AA repeats of S-P-R-R-R-R-S-Q region spans residues 184 to 206; that stretch reads SPRRRTPSPRRRRSQSPRRRRSQ. The propeptide occupies 184–212; sequence SPRRRTPSPRRRRSQSPRRRRSQSPASQC. 2 consecutive repeat copies span residues 191-198 and 199-206.

The protein belongs to the orthohepadnavirus precore antigen family. As to quaternary structure, homodimerizes. Phosphorylated. In terms of processing, cleaved by host furin.

The protein resides in the secreted. The protein localises to the host nucleus. Functionally, may regulate immune response to the intracellular capsid in acting as a T-cell tolerogen, by having an immunoregulatory effect which prevents destruction of infected cells by cytotoxic T-cells. This immune regulation may predispose to chronicity during perinatal infections and prevent severe liver injury during adult infections. The chain is External core antigen from Gibbon hepatitis B virus subtype ayw3q (isolate Hope) (HBVgbn).